Consider the following 236-residue polypeptide: Terpene cyclase andB (236 aa).

The next 7 helical transmembrane spans lie at 13–33, 45–65, 70–90, 106–126, 135–155, 166–186, and 200–220; these read TVVNLLGSASGIGWILNYILM, MSMLPLCCNIAWEFVYGILCP, VVRPVILSWLVLNCLVVYAAI, HLPLLFTVGIAACTGFHIALI, FLWSARSCQVLLSIGGLFQLL, VLWLSRFLGSICGVLKMTLMW, and LTAYCIALWIISDVLYGVVFY.

This sequence belongs to the paxB family.

It localises to the membrane. It functions in the pathway secondary metabolite biosynthesis; terpenoid biosynthesis. In terms of biological role, terpene cyclase; part of the gene cluster that mediates the biosynthesis of anditomin, a fungal meroterpenoid. The first step of the pathway is the synthesis of 3,5-dimethylorsellinic acid (DMOA) by the polyketide synthase andM. DMOA is then converted to the phthalide compound 5,7-dihydroxy-4,6-dimethylphthalide (DHDMP) by the cytochrome P450 monooxygenase andK, which is further prenylated by the prenyltransferase andD to yield farnesyl-DHDMP. Further epoxidation by the FAD-dependent monooxygenase andE leads to epoxyfarnesyl-DHDMP. The next step involves the terpene cyclase andB that converts epoxyfarnesyl-DHDMP into preandiloid A through opening of the epoxide ring followed by the cyclization of the farnesyl moiety. Preandiloid A is in turn oxidized at the C-3 hydroxyl group to yield preandiloid B by the dehydrogenase andC. The dioxygenase andA is solely responsible for the dehydrogenation of preandiloid B leading to the enone preandiloid C, as well as for the intriguing structural rearrangement to generate the bicyclo[2.2.2]octane core, transforming preandiloid C into andiconin. FAD-binding monooxygenase andJ then produces andilesin D which is reduced by dehydrogenase andI to yield andilesin A. Action of acetyltransferase andG followed by a spontaneous acetate elimination leads then to andilesin B, which is in turn substrate of the short chain dehydrogenase andH to yield andilesin C. Finally, the dioxygenase andF catalyzes the transformation of andilesin C to anditomin. In Emericella variicolor (Aspergillus stellatus), this protein is Terpene cyclase andB.